The sequence spans 185 residues: Ribosome-recycling factor (185 aa).

The segment at 142–165 (IVKDGDAGEDEGSRAEKELDGLTK) is disordered.

This sequence belongs to the RRF family.

It localises to the cytoplasm. Functionally, responsible for the release of ribosomes from messenger RNA at the termination of protein biosynthesis. May increase the efficiency of translation by recycling ribosomes from one round of translation to another. The chain is Ribosome-recycling factor from Renibacterium salmoninarum (strain ATCC 33209 / DSM 20767 / JCM 11484 / NBRC 15589 / NCIMB 2235).